A 188-amino-acid chain; its full sequence is MSRLRIFADTNPATPEFDSRDGDAIASELKKIGVTFERWHASAPVEPGATPEQVMDAYRADIDRISAERGFKTVDVVSIAPDNPKREEMRAKFLDEHFHKEDEVRFFVAGSGLFTLHVDAKVYEIECVKDDLIAVPDSTLHWFDMGPEPHFVAIRFFTEPDGWVGHFTGTEIAKQFPRYAPEKPHKAS.

Histidine 97, histidine 99, glutamate 103, and histidine 141 together coordinate Fe(2+). Positions 97, 99, 103, and 141 each coordinate Ni(2+).

It belongs to the acireductone dioxygenase (ARD) family. As to quaternary structure, monomer. Fe(2+) is required as a cofactor. The cofactor is Ni(2+).

It carries out the reaction 1,2-dihydroxy-5-(methylsulfanyl)pent-1-en-3-one + O2 = 3-(methylsulfanyl)propanoate + CO + formate + 2 H(+). The enzyme catalyses 1,2-dihydroxy-5-(methylsulfanyl)pent-1-en-3-one + O2 = 4-methylsulfanyl-2-oxobutanoate + formate + 2 H(+). It functions in the pathway amino-acid biosynthesis; L-methionine biosynthesis via salvage pathway; L-methionine from S-methyl-5-thio-alpha-D-ribose 1-phosphate: step 5/6. Its function is as follows. Catalyzes 2 different reactions between oxygen and the acireductone 1,2-dihydroxy-3-keto-5-methylthiopentene (DHK-MTPene) depending upon the metal bound in the active site. Fe-containing acireductone dioxygenase (Fe-ARD) produces formate and 2-keto-4-methylthiobutyrate (KMTB), the alpha-ketoacid precursor of methionine in the methionine recycle pathway. Ni-containing acireductone dioxygenase (Ni-ARD) produces methylthiopropionate, carbon monoxide and formate, and does not lie on the methionine recycle pathway. The protein is Acireductone dioxygenase of Xanthomonas oryzae pv. oryzae (strain MAFF 311018).